A 463-amino-acid chain; its full sequence is Siroheme synthase (463 aa).

Residues 1-203 (MDYLPLFHKL…GQGAEAERLL (203 aa)) form a precorrin-2 dehydrogenase /sirohydrochlorin ferrochelatase region. NAD(+) is bound by residues 22–23 (EI) and 43–44 (PD). Residue serine 128 is modified to Phosphoserine. The segment at 216–463 (GEVYLVGAGP…LAWFEGSQNS (248 aa)) is uroporphyrinogen-III C-methyltransferase. Residue proline 225 participates in S-adenosyl-L-methionine binding. Aspartate 248 (proton acceptor) is an active-site residue. Lysine 270 functions as the Proton donor in the catalytic mechanism. S-adenosyl-L-methionine-binding positions include 301 to 303 (GGD), isoleucine 306, 331 to 332 (TA), methionine 383, and glycine 412.

In the N-terminal section; belongs to the precorrin-2 dehydrogenase / sirohydrochlorin ferrochelatase family. This sequence in the C-terminal section; belongs to the precorrin methyltransferase family.

The enzyme catalyses uroporphyrinogen III + 2 S-adenosyl-L-methionine = precorrin-2 + 2 S-adenosyl-L-homocysteine + H(+). It carries out the reaction precorrin-2 + NAD(+) = sirohydrochlorin + NADH + 2 H(+). The catalysed reaction is siroheme + 2 H(+) = sirohydrochlorin + Fe(2+). It functions in the pathway cofactor biosynthesis; adenosylcobalamin biosynthesis; precorrin-2 from uroporphyrinogen III: step 1/1. It participates in cofactor biosynthesis; adenosylcobalamin biosynthesis; sirohydrochlorin from precorrin-2: step 1/1. Its pathway is porphyrin-containing compound metabolism; siroheme biosynthesis; precorrin-2 from uroporphyrinogen III: step 1/1. The protein operates within porphyrin-containing compound metabolism; siroheme biosynthesis; siroheme from sirohydrochlorin: step 1/1. It functions in the pathway porphyrin-containing compound metabolism; siroheme biosynthesis; sirohydrochlorin from precorrin-2: step 1/1. Its function is as follows. Multifunctional enzyme that catalyzes the SAM-dependent methylations of uroporphyrinogen III at position C-2 and C-7 to form precorrin-2 via precorrin-1. Then it catalyzes the NAD-dependent ring dehydrogenation of precorrin-2 to yield sirohydrochlorin. Finally, it catalyzes the ferrochelation of sirohydrochlorin to yield siroheme. The protein is Siroheme synthase of Pseudomonas putida (strain ATCC 700007 / DSM 6899 / JCM 31910 / BCRC 17059 / LMG 24140 / F1).